The following is a 185-amino-acid chain: Ribosome-recycling factor (185 aa).

Belongs to the RRF family.

It localises to the cytoplasm. Responsible for the release of ribosomes from messenger RNA at the termination of protein biosynthesis. May increase the efficiency of translation by recycling ribosomes from one round of translation to another. The polypeptide is Ribosome-recycling factor (Nitrosomonas eutropha (strain DSM 101675 / C91 / Nm57)).